We begin with the raw amino-acid sequence, 191 residues long: Thymidine kinase (191 aa).

ATP is bound by residues 15–22 (GPMYSGKT) and 88–91 (DEAQ). The Proton acceptor role is filled by E89. Residues C145, C148, C183, and C186 each coordinate Zn(2+).

It belongs to the thymidine kinase family. As to quaternary structure, homotetramer.

The protein localises to the cytoplasm. It carries out the reaction thymidine + ATP = dTMP + ADP + H(+). This Clostridium botulinum (strain Loch Maree / Type A3) protein is Thymidine kinase.